Consider the following 334-residue polypeptide: N-acetyl-gamma-glutamyl-phosphate reductase (334 aa).

Residue cysteine 145 is part of the active site. The segment at 173–192 (GISGSGQDPTEGTHYPNVTQ) is disordered.

It belongs to the NAGSA dehydrogenase family. Type 1 subfamily.

Its subcellular location is the cytoplasm. It catalyses the reaction N-acetyl-L-glutamate 5-semialdehyde + phosphate + NADP(+) = N-acetyl-L-glutamyl 5-phosphate + NADPH + H(+). It functions in the pathway amino-acid biosynthesis; L-arginine biosynthesis; N(2)-acetyl-L-ornithine from L-glutamate: step 3/4. Functionally, catalyzes the NADPH-dependent reduction of N-acetyl-5-glutamyl phosphate to yield N-acetyl-L-glutamate 5-semialdehyde. The sequence is that of N-acetyl-gamma-glutamyl-phosphate reductase from Methanocella arvoryzae (strain DSM 22066 / NBRC 105507 / MRE50).